Here is a 294-residue protein sequence, read N- to C-terminus: Glyceraldehyde-3-phosphate dehydrogenase (294 aa).

3 residues coordinate NAD(+): Asp-19, Arg-63, and Thr-105. D-glyceraldehyde 3-phosphate contacts are provided by residues 134 to 136 (SCT) and Thr-165. Cys-135 serves as the catalytic Nucleophile. At Lys-177 the chain carries N6-acetyllysine. D-glyceraldehyde 3-phosphate-binding positions include 194–195 (TG) and Arg-217. An N6-acetyllysine modification is found at Lys-234.

Belongs to the glyceraldehyde-3-phosphate dehydrogenase family. In terms of assembly, homotetramer.

Its subcellular location is the cytoplasm. It catalyses the reaction D-glyceraldehyde 3-phosphate + phosphate + NAD(+) = (2R)-3-phospho-glyceroyl phosphate + NADH + H(+). It functions in the pathway carbohydrate degradation; glycolysis; pyruvate from D-glyceraldehyde 3-phosphate: step 1/5. Functionally, catalyzes the oxidative phosphorylation of glyceraldehyde 3-phosphate (G3P) to 1,3-bisphosphoglycerate (BPG) using the cofactor NAD. The first reaction step involves the formation of a hemiacetal intermediate between G3P and a cysteine residue, and this hemiacetal intermediate is then oxidized to a thioester, with concomitant reduction of NAD to NADH. The reduced NADH is then exchanged with the second NAD, and the thioester is attacked by a nucleophilic inorganic phosphate to produce BPG. This is Glyceraldehyde-3-phosphate dehydrogenase (gap) from Pseudescherichia vulneris (Escherichia vulneris).